Consider the following 434-residue polypeptide: GTPase Obg (434 aa).

One can recognise an Obg domain in the interval 1–158 (MFLDTAKIKV…RELQLELKIL (158 aa)). Positions 159–336 (ADVGLVGFPS…LLDATAELLD (178 aa)) constitute an OBG-type G domain. GTP is bound by residues 165 to 172 (GFPSVGKS), 190 to 194 (FTTIV), 212 to 215 (DLPG), 282 to 285 (NKMD), and 317 to 319 (SGL). Mg(2+)-binding residues include serine 172 and threonine 192. Positions 356 to 434 (GFDEEEKAFE…IGKFEFEFVD (79 aa)) constitute an OCT domain.

It belongs to the TRAFAC class OBG-HflX-like GTPase superfamily. OBG GTPase family. In terms of assembly, monomer. The cofactor is Mg(2+).

It localises to the cytoplasm. Its function is as follows. An essential GTPase which binds GTP, GDP and possibly (p)ppGpp with moderate affinity, with high nucleotide exchange rates and a fairly low GTP hydrolysis rate. Plays a role in control of the cell cycle, stress response, ribosome biogenesis and in those bacteria that undergo differentiation, in morphogenesis control. This Streptococcus pneumoniae serotype 19F (strain G54) protein is GTPase Obg.